The sequence spans 592 residues: Aspartate--tRNA(Asp/Asn) ligase (592 aa).

E182 is a binding site for L-aspartate. Positions 206 to 209 (QIFK) are aspartate. R228 provides a ligand contact to L-aspartate. Residues 228 to 230 (RDE) and Q237 contribute to the ATP site. H455 is a binding site for L-aspartate. An ATP-binding site is contributed by E489. L-aspartate is bound at residue R496. 541-544 (GLDR) serves as a coordination point for ATP.

It belongs to the class-II aminoacyl-tRNA synthetase family. Type 1 subfamily. Homodimer.

It is found in the cytoplasm. It catalyses the reaction tRNA(Asx) + L-aspartate + ATP = L-aspartyl-tRNA(Asx) + AMP + diphosphate. Its function is as follows. Aspartyl-tRNA synthetase with relaxed tRNA specificity since it is able to aspartylate not only its cognate tRNA(Asp) but also tRNA(Asn). Reaction proceeds in two steps: L-aspartate is first activated by ATP to form Asp-AMP and then transferred to the acceptor end of tRNA(Asp/Asn). This Thermoanaerobacter sp. (strain X514) protein is Aspartate--tRNA(Asp/Asn) ligase.